A 246-amino-acid chain; its full sequence is Putative carbonic anhydrase 3 (246 aa).

The Alpha-carbonic anhydrase domain maps to 3–244 (GHWSYCDDDE…LNDRKIVHIV (242 aa)). Histidine 61 acts as the Proton acceptor in catalysis. Zn(2+) is bound by residues histidine 91, histidine 93, and histidine 116. 187-188 (TT) serves as a coordination point for substrate.

The protein belongs to the alpha-carbonic anhydrase family. The cofactor is Zn(2+).

The catalysed reaction is hydrogencarbonate + H(+) = CO2 + H2O. Functionally, reversible hydration of carbon dioxide. This is Putative carbonic anhydrase 3 (cah-3) from Caenorhabditis elegans.